We begin with the raw amino-acid sequence, 130 residues long: Secreted cysteine-rich effector 2 (130 aa).

The N-terminal stretch at M1 to A23 is a signal peptide. The interval L68–V85 is plant immunity suppression domain.

It localises to the secreted. It is found in the host cell. The protein localises to the host periplasm. In terms of biological role, secreted effector required for full virulence of U.virens. Inhibits host pathogen-associated molecular pattern-triggered immunity including flg22- and chitin-induced defense gene expression and oxidative burst. The chain is Secreted cysteine-rich effector 2 from Ustilaginoidea virens (Rice false smut fungus).